Here is a 211-residue protein sequence, read N- to C-terminus: Outer surface protein C (211 aa).

Residues 1–18 (MKKNTLSAILMTLFLFIS) form the signal peptide. C19 is lipidated: N-palmitoyl cysteine. C19 carries S-diacylglycerol cysteine lipidation.

The protein belongs to the OspC lipoprotein family. As to quaternary structure, homodimer. Interacts with tick I.ricinus salivary protein Iric-1, Iric-2 and Iric-3. Binds human (host) plasminogen.

The protein localises to the cell outer membrane. It localises to the cell surface. Major immunodominant protein in mammalian hosts. Required for initial stages of mammalian infection. Inhibits macrophage-mediated phagocytosis of the bacteria. Binds human plasminogen; this probably confers an extracellular protease activity on the bacteria that allows it to traverse tissue. Interaction with tick I.ricinus salivary protein Salp15 protects the bacteria from antibody-mediated killing in vitro and in vivo. This Borreliella burgdorferi (Lyme disease spirochete) protein is Outer surface protein C.